The primary structure comprises 448 residues: Adenosylhomocysteinase (448 aa).

Substrate contacts are provided by Thr61, Asp136, and Glu161. 162 to 164 provides a ligand contact to NAD(+); the sequence is TTA. Lys191 and Asp195 together coordinate substrate. NAD(+) contacts are provided by residues Asn196, 225 to 230, Glu248, Asn283, 304 to 306, and Asn360; these read GYGDVG and IGH.

Belongs to the adenosylhomocysteinase family. NAD(+) serves as cofactor.

The protein localises to the cytoplasm. It catalyses the reaction S-adenosyl-L-homocysteine + H2O = L-homocysteine + adenosine. Its pathway is amino-acid biosynthesis; L-homocysteine biosynthesis; L-homocysteine from S-adenosyl-L-homocysteine: step 1/1. Its function is as follows. May play a key role in the regulation of the intracellular concentration of adenosylhomocysteine. In Rhodopirellula baltica (strain DSM 10527 / NCIMB 13988 / SH1), this protein is Adenosylhomocysteinase.